The chain runs to 301 residues: Probable alpha-L-glutamate ligase (301 aa).

The 184-residue stretch at 104-287 (LQLLSRKGIG…VADEIIRFIE (184 aa)) folds into the ATP-grasp domain. ATP is bound by residues Lys-141, 178–179 (EF), Asp-187, and 211–213 (RSN). 3 residues coordinate Mg(2+): Asp-248, Glu-260, and Asn-262. The Mn(2+) site is built by Asp-248, Glu-260, and Asn-262.

This sequence belongs to the RimK family. Requires Mg(2+) as cofactor. It depends on Mn(2+) as a cofactor.

The protein is Probable alpha-L-glutamate ligase of Syntrophotalea carbinolica (strain DSM 2380 / NBRC 103641 / GraBd1) (Pelobacter carbinolicus).